The following is a 31-amino-acid chain: Small protein MgtS (31 aa).

The Periplasmic portion of the chain corresponds to 1-4; sequence MLGN. The chain crosses the membrane as a helical span at residues 5–25; the sequence is MNVFMAVLGIILFSGFLAAYF. Over 26-31 the chain is Cytoplasmic; it reads SHKWDD.

As to quaternary structure, interacts with MgtA.

The protein localises to the cell inner membrane. Modulates intracellular Mg(2+) levels to maintain cellular integrity upon Mg(2+) limitation. Acts by binding and stabilizing the Mg(2+) transporter MgtA, thereby leading to increased intracellular level of Mg(2+). May inhibit FtsH proteolysis of MgtA. In Escherichia coli (strain K12), this protein is Small protein MgtS.